We begin with the raw amino-acid sequence, 403 residues long: uncharacterized protein (403 aa).

Helical transmembrane passes span 29–49 (FVIF…CGFL) and 55–75 (AFIA…FFGC).

It belongs to the chlamydial CPn_0129/CT_036/TC_0306 family.

The protein localises to the cell membrane. This is an uncharacterized protein from Chlamydia trachomatis serovar D (strain ATCC VR-885 / DSM 19411 / UW-3/Cx).